The chain runs to 224 residues: Germin-like protein 8-12 (224 aa).

The first 23 residues, M1–A23, serve as a signal peptide directing secretion. A disulfide bridge links C33 with C48. The Cupin type-1 domain occupies F60–D213. N78 is a glycosylation site (N-linked (GlcNAc...) asparagine). H111, H113, E118, and H158 together coordinate Mn(2+).

Belongs to the germin family. As to quaternary structure, oligomer (believed to be a pentamer but probably hexamer).

It localises to the secreted. The protein localises to the extracellular space. The protein resides in the apoplast. Its function is as follows. Plays a role in broad-spectrum disease resistance. Probably has no oxalate oxidase activity even if the active site is conserved. This is Germin-like protein 8-12 from Oryza sativa subsp. japonica (Rice).